A 360-amino-acid polypeptide reads, in one-letter code: Peptide chain release factor 1 (360 aa).

Residue Q235 is modified to N5-methylglutamine.

This sequence belongs to the prokaryotic/mitochondrial release factor family. Post-translationally, methylated by PrmC. Methylation increases the termination efficiency of RF1.

The protein localises to the cytoplasm. Functionally, peptide chain release factor 1 directs the termination of translation in response to the peptide chain termination codons UAG and UAA. The chain is Peptide chain release factor 1 from Burkholderia vietnamiensis (strain G4 / LMG 22486) (Burkholderia cepacia (strain R1808)).